The sequence spans 53 residues: uncharacterized protein (53 aa).

This is an uncharacterized protein from Haemophilus influenzae (strain ATCC 51907 / DSM 11121 / KW20 / Rd).